Reading from the N-terminus, the 674-residue chain is MMRLRGSAMLRELLLRPPAAVGAVLRRAQPLGTLCRRPRGGSRPTAGLVAAARLHPWWGGGGRAKGPGAGGLSSSPSEILQELGKGGTPPQQQQQQQQQPGASPPAAPGPKDSPGETDAFGNSEGKEMVAAGDNKIKQGLLPSLEDLLFYTIAEGQEKIPVHKFITALKSTGLRTSDPRLKECMDMLRLTLQTTSDGVMLDKDLFKKCVQSNIVLLTQAFRRKFVIPDFMSFTSHIDELYESAKKQSGGKVADYIPQLAKFSPDLWGVSVCTVDGQRHSIGDTKVPFCLQSCVKPLKYAIAVNDLGTEYVHRYVGKEPSGLRFNKLFLNEDDKPHNPMVNAGAIVVTSLIKQGVNNAEKFDYVMQFLNKMAGNEYVGFSNATFQSERESGDRNFAIGYYLKEKKCFPEGTDMVGILDFYFQLCSIEVTCESASVMAATLANGGFCPITGERVLSPEAVRNTLSLMHSCGMYDFSGQFAFHVGLPAKSGVAGGILLVVPNVMGMMCWSPPLDKMGNSVKGIHFCHDLVSLCNFHNYDNLRHFAKKLDPRREGGDQRVKSVINLLFAAYTGDVSALRRFALSAMDMEQRDYDSRTALHVAAAEGHVEVVKFLLEACKVNPFPKDRWNNTPMDEALHFGHHDVFKILQEYQVQYTPQGDSDDGKGNQTVHKNLDGLL.

The N-terminal 54 residues, 1 to 54 (MMRLRGSAMLRELLLRPPAAVGAVLRRAQPLGTLCRRPRGGSRPTAGLVAAARL), are a transit peptide targeting the mitochondrion. The tract at residues 56 to 123 (PWWGGGGRAK…PGETDAFGNS (68 aa)) is disordered. Gly residues predominate over residues 58 to 71 (WGGGGRAKGPGAGG). The segment covering 89–101 (PPQQQQQQQQQPG) has biased composition (low complexity). Residues K135 and K169 each carry the N6-succinyllysine modification. S291 serves as a coordination point for substrate. Residue K316 is modified to N6-acetyllysine. The segment at 320-327 (GLRFNKLF) is highly mobile activation loop. Substrate contacts are provided by N340, E386, N393, Y419, Y471, and V489. ANK repeat units lie at residues 590-619 (DSRT…VNPF) and 624-653 (WNNT…QYTP). Residues 652–674 (TPQGDSDDGKGNQTVHKNLDGLL) are disordered. S657 carries the phosphoserine modification.

The protein belongs to the glutaminase family. As to quaternary structure, homotetramer, dimer of dimers. The tetramers can assemble into rod-like oligomers (in vitro), but the physiological significance of this is not clear. Interacts with RAF1 and MAP2K2. Interacts with ATCAY; the interaction is direct and may control GLS localization, negatively regulating its activity. Synthesized as a 74-kDa cytosolic precursor which is proteolytically processed by the mitochondrial-processing peptidase (MPP) via a 72-kDa intermediate to yield the mature mitochondrial 68- and 65-kDa subunits.

It is found in the mitochondrion. It localises to the cytoplasm. The protein localises to the cytosol. Its subcellular location is the mitochondrion matrix. It catalyses the reaction L-glutamine + H2O = L-glutamate + NH4(+). Isoform 1 and isoform 2 are activated by phosphate, due to increased affinity for glutamine. At phosphate concentrations above 10 mM, isoform 2 is more efficient than isoform 1. Its function is as follows. Catalyzes the first reaction in the primary pathway for the renal catabolism of glutamine. Plays a role in maintaining acid-base homeostasis. Regulates the levels of the neurotransmitter glutamate, the main excitatory neurotransmitter in the brain. The sequence is that of Glutaminase kidney isoform, mitochondrial (Gls) from Mus musculus (Mouse).